The sequence spans 371 residues: Phosphate acyltransferase (371 aa).

The protein belongs to the PlsX family. In terms of assembly, homodimer. Probably interacts with PlsY.

The protein resides in the cytoplasm. The catalysed reaction is a fatty acyl-[ACP] + phosphate = an acyl phosphate + holo-[ACP]. It functions in the pathway lipid metabolism; phospholipid metabolism. In terms of biological role, catalyzes the reversible formation of acyl-phosphate (acyl-PO(4)) from acyl-[acyl-carrier-protein] (acyl-ACP). This enzyme utilizes acyl-ACP as fatty acyl donor, but not acyl-CoA. This is Phosphate acyltransferase from Polaromonas sp. (strain JS666 / ATCC BAA-500).